The primary structure comprises 35 residues: Potassium channel toxin alpha-KTx 6.15 (35 aa).

4 disulfide bridges follow: cysteine 3–cysteine 24, cysteine 9–cysteine 29, cysteine 13–cysteine 31, and cysteine 19–cysteine 34.

Belongs to the short scorpion toxin superfamily. Potassium channel inhibitor family. Alpha-KTx 06 subfamily. Expressed by the venom gland.

It is found in the secreted. Functionally, blocks voltage-gated potassium channels rKv1.1/KCNA1 (IC(50)=13 nM), rKv1.2/KCNA2 (IC(50)=16 nM) and rKv1.3/KCNA3 (IC(50)=2 nM). The polypeptide is Potassium channel toxin alpha-KTx 6.15 (Hemiscorpius lepturus (Scorpion)).